A 158-amino-acid chain; its full sequence is Low molecular weight phosphotyrosine protein phosphatase (158 aa).

Residue Ala-2 is modified to N-acetylalanine. The Nucleophile role is filled by Cys-13. Residue Arg-19 is part of the active site. Asp-130 acts as the Proton donor in catalysis. Phosphotyrosine is present on residues Tyr-132 and Tyr-133.

The protein belongs to the low molecular weight phosphotyrosine protein phosphatase family. In terms of assembly, interacts with EPHA2; dephosphorylates EPHA2. Interacts with EPHB1. As to quaternary structure, interacts with the SH3 domain of SPTAN1. There is no interaction observed for isoform 2. Phosphorylated by LCK. Phosphorylation at Tyr-132 increases its phosphatase activity. Widely expressed with highest levels in brain and liver and lowest levels in muscle.

Its subcellular location is the cytoplasm. The catalysed reaction is O-phospho-L-tyrosyl-[protein] + H2O = L-tyrosyl-[protein] + phosphate. It catalyses the reaction a phosphate monoester + H2O = an alcohol + phosphate. Its activity is regulated as follows. Inhibited by sulfhydryl reagents. Functionally, acts on tyrosine phosphorylated proteins, low-MW aryl phosphates and natural and synthetic acyl phosphates with differences in substrate specificity between isoform 1 and isoform 2. The sequence is that of Low molecular weight phosphotyrosine protein phosphatase from Mus musculus (Mouse).